Consider the following 119-residue polypeptide: Large ribosomal subunit protein uL18 (119 aa).

The protein belongs to the universal ribosomal protein uL18 family. In terms of assembly, part of the 50S ribosomal subunit; part of the 5S rRNA/L5/L18/L25 subcomplex. Contacts the 5S and 23S rRNAs.

This is one of the proteins that bind and probably mediate the attachment of the 5S RNA into the large ribosomal subunit, where it forms part of the central protuberance. The protein is Large ribosomal subunit protein uL18 of Cereibacter sphaeroides (strain ATCC 17025 / ATH 2.4.3) (Rhodobacter sphaeroides).